A 510-amino-acid chain; its full sequence is NAD(P)H-quinone oxidoreductase subunit 2 A, chloroplastic (510 aa).

Helical transmembrane passes span Phe31 to Thr51, Trp59 to Trp79, Ile99 to Ile119, Met124 to Cys144, Leu149 to Tyr169, Leu184 to Leu204, Ile229 to Phe249, Pro261 to Thr281, Trp295 to Ile315, Met323 to Asp343, Tyr354 to Leu374, Ala395 to Phe415, Leu418 to Leu438, and Met484 to Ile504.

This sequence belongs to the complex I subunit 2 family. In terms of assembly, NDH is composed of at least 16 different subunits, 5 of which are encoded in the nucleus.

The protein localises to the plastid. The protein resides in the chloroplast thylakoid membrane. The enzyme catalyses a plastoquinone + NADH + (n+1) H(+)(in) = a plastoquinol + NAD(+) + n H(+)(out). It carries out the reaction a plastoquinone + NADPH + (n+1) H(+)(in) = a plastoquinol + NADP(+) + n H(+)(out). In terms of biological role, NDH shuttles electrons from NAD(P)H:plastoquinone, via FMN and iron-sulfur (Fe-S) centers, to quinones in the photosynthetic chain and possibly in a chloroplast respiratory chain. The immediate electron acceptor for the enzyme in this species is believed to be plastoquinone. Couples the redox reaction to proton translocation, and thus conserves the redox energy in a proton gradient. The chain is NAD(P)H-quinone oxidoreductase subunit 2 A, chloroplastic from Oryza sativa subsp. japonica (Rice).